Here is an 803-residue protein sequence, read N- to C-terminus: Lon protease (803 aa).

The Lon N-terminal domain maps to 9–202 (MPVLPLRDVV…YLLGMMESEA (194 aa)). 356–363 (GPPGVGKT) serves as a coordination point for ATP. One can recognise a Lon proteolytic domain in the interval 592–773 (QNRIGEVTGL…DEVLGFALEN (182 aa)). Catalysis depends on residues Ser679 and Lys722.

The protein belongs to the peptidase S16 family. In terms of assembly, homohexamer. Organized in a ring with a central cavity.

Its subcellular location is the cytoplasm. It carries out the reaction Hydrolysis of proteins in presence of ATP.. In terms of biological role, ATP-dependent serine protease that mediates the selective degradation of mutant and abnormal proteins as well as certain short-lived regulatory proteins. Required for cellular homeostasis and for survival from DNA damage and developmental changes induced by stress. Degrades polypeptides processively to yield small peptide fragments that are 5 to 10 amino acids long. Binds to DNA in a double-stranded, site-specific manner. This chain is Lon protease, found in Haemophilus influenzae (strain ATCC 51907 / DSM 11121 / KW20 / Rd).